A 726-amino-acid polypeptide reads, in one-letter code: Methionine--tRNA ligase (726 aa).

Positions 12-22 (PYVNNIPHLGN) match the 'HIGH' region motif. C143, C146, C155, and C158 together coordinate Zn(2+). The 'KMSKS' region motif lies at 330–334 (KFSKS). An ATP-binding site is contributed by K333. One can recognise a tRNA-binding domain in the interval 562–667 (FSEKVCLKVV…DNPIPGERII (106 aa)).

The protein belongs to the class-I aminoacyl-tRNA synthetase family. MetG type 1 subfamily. Homodimer. Zn(2+) serves as cofactor.

It is found in the cytoplasm. It carries out the reaction tRNA(Met) + L-methionine + ATP = L-methionyl-tRNA(Met) + AMP + diphosphate. Its function is as follows. Is required not only for elongation of protein synthesis but also for the initiation of all mRNA translation through initiator tRNA(fMet) aminoacylation. In Borrelia turicatae (strain 91E135), this protein is Methionine--tRNA ligase.